A 266-amino-acid chain; its full sequence is Integral membrane protein 2B (266 aa).

Over 1-54 (MVKVTFNSALAQKEAKKDESKSGEEALIIPPDAVAVDCKDPDEVVPVGQRRAWC) the chain is Cytoplasmic. Residues 55–75 (WCMCFGLAFMLAGVILGGAYL) form a helical; Signal-anchor for type II membrane protein membrane-spanning segment. Residues 76–266 (YKYFAFQPDD…RFAVETLICP (191 aa)) are Lumenal-facing. A necessary for interaction with APP and inhibitor effects on APP processing region spans residues 102–134 (EPSADAPASRYQTIEENIKIFEEDEVEFISVPV). Residues 137 to 231 (FADSDPANIV…LCHDKETYKL (95 aa)) form the BRICHOS domain. Intrachain disulfides connect Cys164–Cys223 and Cys248–Cys265. An N-linked (GlcNAc...) asparagine glycan is attached at Asn170.

This sequence belongs to the ITM2 family. In terms of assembly, homodimer; disulfide-linked. Interacts with SPPL2A and SPPL2B. Interacts with APP. Mature BRI2 (mBRI2) interacts with the APP amyloid-beta A4 protein; the interaction occurs at the cell surface and in the endocytic compartments and enable alpha- and beta-secretase-induced APP cleavage inhibition. Mature BRI2 (mBRI2) interacts with the APP C99; the interaction occurs in the endocytic compartments and enable gamma-secretase-induced C99 cleavage inhibition. May form heterodimers with Bri23 peptide and APP amyloid-beta protein 40. Interacts with ADAM7 in sperm; the interaction increases following capacitation. Post-translationally, the ectodomain C-terminal part of the imBRI2 is processed by furin producing a secreted Bri23 peptide and a mature BRI2, membrane form (mBRI2). The remaining part of the ectodomain of mBRI2 containing the BRICHOS domain is cleaved by ADAM10 and is secreted (BRI2C, soluble form). The membrane-bound N-terminal fragment (BRI2C, membrane form) is further proteolytically processed by SPPL2A and SPPL2B through regulated intramembrane proteolysis producing a secreted C-peptide and a BRI2 intracellular domain (BRI2 ICD) released in the cytosol. Shedding by ADAM10 facilitates intramembrane cleavage but is not absolutely required for BRI2 ICD generation. Glycosylation at Asn-170 is important for cell surface localization, but doesn't affect furin- and ADAM10-induced proteolytic processing.

The protein localises to the golgi apparatus membrane. It localises to the cell membrane. The protein resides in the endosome membrane. It is found in the secreted. Functionally, plays a regulatory role in the processing of the amyloid-beta A4 precursor protein (APP) and acts as an inhibitor of the amyloid-beta peptide aggregation and fibrils deposition. Plays a role in the induction of neurite outgrowth. Functions as a protease inhibitor by blocking access of secretases to APP cleavage sites. Mature BRI2 (mBRI2) functions as a modulator of the amyloid-beta A4 precursor protein (APP) processing leading to a strong reduction in the secretion of secretase-processed amyloid-beta protein 40 and amyloid-beta protein 42. Its function is as follows. Bri23 peptide prevents aggregation of APP amyloid-beta protein 42 into toxic oligomers. This chain is Integral membrane protein 2B (ITM2B), found in Bos taurus (Bovine).